The chain runs to 412 residues: Stachydrine N-demethylase (412 aa).

A Rieske domain is found at 45-150; the sequence is LYAVPVCQLA…LRNLDGLIYI (106 aa). Positions 86, 88, 106, and 109 each coordinate [2Fe-2S] cluster. His204, His209, and Asp360 together coordinate Fe cation.

Belongs to the bacterial ring-hydroxylating dioxygenase alpha subunit family. In terms of assembly, homotrimer. The system is probably composed of an oxygenase subunit (Stc2) and two reductase subunits (Stc3 and Stc4). Requires [2Fe-2S] cluster as cofactor. It depends on Fe cation as a cofactor.

It carries out the reaction L-proline betaine + NADH + O2 + H(+) = N-methyl-L-proline + formaldehyde + NAD(+) + H2O. The catalysed reaction is L-proline betaine + NADPH + O2 + H(+) = N-methyl-L-proline + formaldehyde + NADP(+) + H2O. Its function is as follows. Monooxygenase involved in the catabolism of stachydrine (L-proline betaine), a source of carbon and nitrogen. Part of a Rieske-type oxygenase system that catalyzes the demethylation of stachydrine to produce N-methyl-L-proline (monomethylproline). Stc2 is the catalytic subunit. The chain is Stachydrine N-demethylase from Rhizobium meliloti (strain 1021) (Ensifer meliloti).